The primary structure comprises 148 residues: Large ribosomal subunit protein uL15 (148 aa).

Positions 1–30 are enriched in basic residues; it reads MTHSKRNTRKLRGHVSHGHGRVGKHRKHPG. Residues 1 to 38 are disordered; that stretch reads MTHSKRNTRKLRGHVSHGHGRVGKHRKHPGGRGMAGPE.

This sequence belongs to the universal ribosomal protein uL15 family.

The chain is Large ribosomal subunit protein uL15 (RPL27A) from Euplotes crassus.